We begin with the raw amino-acid sequence, 311 residues long: 4-diphosphocytidyl-2-C-methyl-D-erythritol kinase (311 aa).

Residue lysine 16 is part of the active site. Proline 101–alanine 111 lines the ATP pocket. Residue aspartate 143 is part of the active site.

It belongs to the GHMP kinase family. IspE subfamily.

The catalysed reaction is 4-CDP-2-C-methyl-D-erythritol + ATP = 4-CDP-2-C-methyl-D-erythritol 2-phosphate + ADP + H(+). The protein operates within isoprenoid biosynthesis; isopentenyl diphosphate biosynthesis via DXP pathway; isopentenyl diphosphate from 1-deoxy-D-xylulose 5-phosphate: step 3/6. Its function is as follows. Catalyzes the phosphorylation of the position 2 hydroxy group of 4-diphosphocytidyl-2C-methyl-D-erythritol. The polypeptide is 4-diphosphocytidyl-2-C-methyl-D-erythritol kinase (Rhodococcus jostii (strain RHA1)).